The chain runs to 175 residues: Alpha-crystallin B chain (175 aa).

Position 1 is an N-acetylmethionine (Met-1). Residues Ser-19, Ser-45, and Ser-59 each carry the phosphoserine modification. Positions 56–164 constitute a sHSP domain; it reads RAPSWIDTGL…PERTIPITRE (109 aa). His-83 is a Zn(2+) binding site. Lys-92 carries the post-translational modification N6-acetyllysine. Positions 104, 106, 111, and 119 each coordinate Zn(2+). Residues 145 to 175 are disordered; sequence VNGPRKQVSGPERTIPITREEKPAVAAAPKK. Position 166 is an N6-acetyllysine (Lys-166).

The protein belongs to the small heat shock protein (HSP20) family. In terms of assembly, heteromer composed of three CRYAA and one CRYAB subunits. Aggregates with homologous proteins, including the small heat shock protein HSPB1, to form large heteromeric complexes. Inter-subunit bridging via zinc ions enhances stability, which is crucial as there is no protein turn over in the lens. Interacts with HSPBAP1. Interacts with TTN/titin. Interacts with TMEM109; in the cellular response to DNA damage. Interacts with DES; binds rapidly during early stages of DES filament assembly and a reduced binding seen in the later stages. Interacts with TMED10; the interaction mediates the translocation from the cytoplasm into the ERGIC (endoplasmic reticulum-Golgi intermediate compartment) and thereby secretion. Interacts with ATP6V1A and with MTOR, forming a ternary complex. Abundantly expressed in the lens of the eye. Expressed in ventricular cardiomyocytes of the heart. Also expressed in skeletal muscle and the kidney.

The protein resides in the cytoplasm. It is found in the cytosol. The protein localises to the nucleus. Its subcellular location is the secreted. It localises to the lysosome. In terms of biological role, may contribute to the transparency and refractive index of the lens. Has chaperone-like activity, preventing aggregation of various proteins under a wide range of stress conditions. In lens epithelial cells, stabilizes the ATP6V1A protein, preventing its degradation by the proteasome. This Mus musculus (Mouse) protein is Alpha-crystallin B chain.